A 348-amino-acid polypeptide reads, in one-letter code: Dihydroorotase (348 aa).

Zn(2+)-binding residues include H17 and H19. Substrate contacts are provided by residues 19–21 and N45; that span reads HLR. Residues K103, H140, and H178 each coordinate Zn(2+). Residue K103 is modified to N6-carboxylysine. Position 140 (H140) interacts with substrate. A substrate-binding site is contributed by L223. D251 is a binding site for Zn(2+). The active site involves D251. Substrate is bound by residues H255 and A267.

This sequence belongs to the metallo-dependent hydrolases superfamily. DHOase family. Class II DHOase subfamily. In terms of assembly, homodimer. It depends on Zn(2+) as a cofactor.

It catalyses the reaction (S)-dihydroorotate + H2O = N-carbamoyl-L-aspartate + H(+). It participates in pyrimidine metabolism; UMP biosynthesis via de novo pathway; (S)-dihydroorotate from bicarbonate: step 3/3. Functionally, catalyzes the reversible cyclization of carbamoyl aspartate to dihydroorotate. The chain is Dihydroorotase from Yersinia pestis.